The chain runs to 448 residues: tRNA modification GTPase MnmE (448 aa).

3 residues coordinate (6S)-5-formyl-5,6,7,8-tetrahydrofolate: Arg-25, Glu-82, and Lys-121. The TrmE-type G domain maps to Gly-217–Gly-372. Asn-227 contacts K(+). GTP-binding positions include Asn-227–Ser-232, Thr-246–Thr-252, Asp-271–Gly-274, and Ser-353–Arg-355. Ser-231 provides a ligand contact to Mg(2+). Thr-246, Ile-248, and Thr-251 together coordinate K(+). Residue Thr-252 participates in Mg(2+) binding. Lys-448 is a binding site for (6S)-5-formyl-5,6,7,8-tetrahydrofolate.

Belongs to the TRAFAC class TrmE-Era-EngA-EngB-Septin-like GTPase superfamily. TrmE GTPase family. As to quaternary structure, homodimer. Heterotetramer of two MnmE and two MnmG subunits. K(+) serves as cofactor.

It localises to the cytoplasm. Functionally, exhibits a very high intrinsic GTPase hydrolysis rate. Involved in the addition of a carboxymethylaminomethyl (cmnm) group at the wobble position (U34) of certain tRNAs, forming tRNA-cmnm(5)s(2)U34. The protein is tRNA modification GTPase MnmE of Methylococcus capsulatus (strain ATCC 33009 / NCIMB 11132 / Bath).